A 113-amino-acid polypeptide reads, in one-letter code: Nitrogenase-stabilizing/protective protein NifW (113 aa).

This sequence belongs to the NifW family. Homotrimer; associates with NifD.

Functionally, may protect the nitrogenase Fe-Mo protein from oxidative damage. The chain is Nitrogenase-stabilizing/protective protein NifW from Dechloromonas aromatica (strain RCB).